The primary structure comprises 979 residues: MTIMNEGKKRSHSSSSDDHLAKRQYVEHGNECIMADEDIDTAIFEDGIKNNMQWQDTISKVVKAVVSIHFAQVAPFDCDPALVSEATGFVVDSELGIILTNRHVVGAGPFVGYVVFDNHEECDVIPIYRDPVHDFGFLKFDPKKIKYTKIHALELKPSLAKVGSEIRVVGNDAGEKLSILAGFISRIDRNAPDYGELTYNDFNTEYIQAAASASGGSSGSPVVNVDGYAVALQAGGSTEASTDFFLPLDRILRALKCIQADQPITRGTIQTQWLLKPYDECKRLGLTPEHESTSRALFPDRIGLLVAETILREGPSDGKIKEGDILIAINGQRISTFIQVDDILDSNVGNNVEFTVQRGGTDINVTCTIGDLHAITPSKYVEVCGATFNELSYQMARFYALPIRGVFLSSASGSFNFDNKEKIGWIVDSVNYQDTPNLDAFVEVMKTIPDKSRVTVRYHHLTDQHSPNVTSIYIDRHWCSEFRIYERNDKTGIWDYTNVADPISEEPLKPHTAKFIPIPSTNPEIAKLSSSLCMVHTVAAIPIDSLSAETLKTSGLIIDAEQGYVIVSRRAVPHDCLDVFVTIADSIVIPATIEFLHPMQNYAIVKYDPNLVKAPVVTPKLSNRRMKRGESAQFIGYTHNNRLITSETSVTDISSVSIPSNLIPRYRATNLEAISIDSNISPRCNFGIMTDQDGTVRALWLSFLGERQENKEKVYLMGLDIMDCKNVINILKSGKKPQVHIIDAGFGSISILHARIRGVPEEWIQKMEAESNNRLQFITVSRVSYTEETVKLQTGDVILSVNDKLVTEMDQLSGIVHASDENIDSHVLHFKVVRDGKIVDLDMKTVQVDETDQIVIFAGCILQKPHHAVRQAMSDIPKGVYCTFRGESSPAIQYGISATNFITHVNEIPTPDLDKFLEVVRQIPDNTYCKIRMMTFDNVPFAISLKTNYHYFPTAELKKNKDTGKWIEKEYNNSQEIPK.

Positions 1-20 are disordered; sequence MTIMNEGKKRSHSSSSDDHL. Positions 65–255 are serine protease; sequence VVSIHFAQVA…LPLDRILRAL (191 aa). Catalysis depends on charge relay system residues His-103, Asp-134, and Ser-217. PDZ domains follow at residues 273–361 and 750–836; these read WLLK…RGGT and SILH…VRDG.

It belongs to the peptidase S1C family.

The protein resides in the nucleus. Its function is as follows. Nuclear serine protease which mediates apoptosis. This is Pro-apoptotic serine protease NMA111 (NMA111) from Candida glabrata (strain ATCC 2001 / BCRC 20586 / JCM 3761 / NBRC 0622 / NRRL Y-65 / CBS 138) (Yeast).